The following is a 353-amino-acid chain: uncharacterized protein (353 aa).

An N-terminal signal peptide occupies residues 1-24; that stretch reads MRVVKRIAVACYLGITIFSGIAFG.

It belongs to the chlamydial CPn_1058/CT_355/TC_0634 family.

This is an uncharacterized protein from Chlamydia muridarum (strain MoPn / Nigg).